Here is a 207-residue protein sequence, read N- to C-terminus: 23 kDa calcium-binding protein (207 aa).

Met1 carries the blocked amino end (Met) modification. EF-hand domains lie at 17–52, 60–95, 119–154, and 161–196; these read AKLDVARKLFAQFDSNKNGTLDPSEVAGLIKTTFEN, VTADDVKLYMKSVDVDNNGLVSYSEYEEYVIACLKK, MKLDVARRLFAKYDSDKSGQLEEKEVYGVITETYKQ, and PTEADVKLWMSMTDTDKNGTVSIVEYEDFVISGLKK. Ca(2+)-binding residues include Asp30, Asn32, Asn34, Thr36, Glu41, Asp73, Asp75, Asn77, Glu84, Asp132, Asp134, Ser136, Gln138, Glu143, Asp174, Asp176, Asn178, Thr180, and Glu185.

Expected to play a crucial role in calcium-dependent regulation of ciliary movement. The sequence is that of 23 kDa calcium-binding protein from Tetrahymena thermophila.